A 300-amino-acid polypeptide reads, in one-letter code: Acetylglutamate kinase (300 aa).

Substrate is bound by residues 68–69 (GG), Arg-90, and Asn-195.

The protein belongs to the acetylglutamate kinase family. ArgB subfamily.

The protein resides in the cytoplasm. The enzyme catalyses N-acetyl-L-glutamate + ATP = N-acetyl-L-glutamyl 5-phosphate + ADP. The protein operates within amino-acid biosynthesis; L-arginine biosynthesis; N(2)-acetyl-L-ornithine from L-glutamate: step 2/4. Its function is as follows. Catalyzes the ATP-dependent phosphorylation of N-acetyl-L-glutamate. The sequence is that of Acetylglutamate kinase from Azotobacter vinelandii (strain DJ / ATCC BAA-1303).